The primary structure comprises 417 residues: Serine hydroxymethyltransferase (417 aa).

Residues L120 and 124-126 (GHL) contribute to the (6S)-5,6,7,8-tetrahydrofolate site. K229 bears the N6-(pyridoxal phosphate)lysine mark. Residue 354-356 (SPF) participates in (6S)-5,6,7,8-tetrahydrofolate binding.

This sequence belongs to the SHMT family. Homodimer. Pyridoxal 5'-phosphate serves as cofactor.

It is found in the cytoplasm. The enzyme catalyses (6R)-5,10-methylene-5,6,7,8-tetrahydrofolate + glycine + H2O = (6S)-5,6,7,8-tetrahydrofolate + L-serine. The protein operates within one-carbon metabolism; tetrahydrofolate interconversion. It functions in the pathway amino-acid biosynthesis; glycine biosynthesis; glycine from L-serine: step 1/1. Its function is as follows. Catalyzes the reversible interconversion of serine and glycine with tetrahydrofolate (THF) serving as the one-carbon carrier. This reaction serves as the major source of one-carbon groups required for the biosynthesis of purines, thymidylate, methionine, and other important biomolecules. Also exhibits THF-independent aldolase activity toward beta-hydroxyamino acids, producing glycine and aldehydes, via a retro-aldol mechanism. The polypeptide is Serine hydroxymethyltransferase (Acinetobacter baumannii (strain AB307-0294)).